We begin with the raw amino-acid sequence, 154 residues long: 3-dehydroquinate dehydratase 2 (154 aa).

Tyr-23 (proton acceptor) is an active-site residue. Substrate contacts are provided by Asn-79, His-85, and Asp-92. His-105 acts as the Proton donor in catalysis. Residues 106-107 (IS) and Arg-116 each bind substrate.

Belongs to the type-II 3-dehydroquinase family. Homododecamer.

The catalysed reaction is 3-dehydroquinate = 3-dehydroshikimate + H2O. It functions in the pathway metabolic intermediate biosynthesis; chorismate biosynthesis; chorismate from D-erythrose 4-phosphate and phosphoenolpyruvate: step 3/7. Its function is as follows. Catalyzes a trans-dehydration via an enolate intermediate. This chain is 3-dehydroquinate dehydratase 2 (aroQ2), found in Ralstonia nicotianae (strain ATCC BAA-1114 / GMI1000) (Ralstonia solanacearum).